The chain runs to 714 residues: Polyribonucleotide nucleotidyltransferase (714 aa).

Mg(2+)-binding residues include aspartate 489 and aspartate 495. One can recognise a KH domain in the interval proline 556–isoleucine 615. Residues glycine 625–lysine 693 form the S1 motif domain. Positions serine 691–aspartate 714 are disordered. A compositionally biased stretch (basic and acidic residues) spans proline 700–aspartate 714.

The protein belongs to the polyribonucleotide nucleotidyltransferase family. Mg(2+) serves as cofactor.

The protein localises to the cytoplasm. The enzyme catalyses RNA(n+1) + phosphate = RNA(n) + a ribonucleoside 5'-diphosphate. Functionally, involved in mRNA degradation. Catalyzes the phosphorolysis of single-stranded polyribonucleotides processively in the 3'- to 5'-direction. The polypeptide is Polyribonucleotide nucleotidyltransferase (Streptococcus equi subsp. equi (strain 4047)).